Here is a 776-residue protein sequence, read N- to C-terminus: ADP-ribosylation factor GTPase-activating protein AGD2 (776 aa).

The BAR domain occupies 2-226 (AGFINLEDSP…IHQVLTYAQQ (225 aa)). The segment at 248 to 267 (QSELDSQQASAKADPSDVGG) is disordered. Residues 290-421 (EVTKQGYLLK…WVNKITAAIT (132 aa)) form the PH domain. In terms of domain architecture, Arf-GAP spans 467–604 (DDVLTILREI…ALVVKDEREA (138 aa)). The C4-type zinc-finger motif lies at 482–505 (CAECNAPDPDWASLNLGVLMCIEC). ANK repeat units lie at residues 683–712 (QGCS…DINM) and 716–745 (HGRT…RPSI).

Expressed in roots, hypocotyls, cotyledons, leaf and shoot apical meristems and siliques.

Its function is as follows. Probable GTPase-activating protein. The chain is ADP-ribosylation factor GTPase-activating protein AGD2 (AGD2) from Arabidopsis thaliana (Mouse-ear cress).